The sequence spans 567 residues: Phosphoglucomutase-like protein 5 (567 aa).

Positions 1 to 26 (MEGSPIPVLTVPTAPYEDQRPAGGGG) are disordered. Residue Thr120 is modified to Phosphothreonine. Phosphoserine is present on Ser122.

The protein belongs to the phosphohexose mutase family. In terms of assembly, interacts with DMD/dystrophin; the interaction is direct. Interacts with UTRN/utrophin. In terms of tissue distribution, detected in smooth and cardiac muscle at high levels and in skeletal muscle at low level. Present in other tissues due to vascular or other smooth muscle component. Low levels are present in liver, kidney, skin and brain (at protein level).

The protein resides in the cell junction. The protein localises to the adherens junction. It is found in the cytoplasm. Its subcellular location is the cytoskeleton. It localises to the cell membrane. The protein resides in the sarcolemma. In terms of biological role, component of adherens-type cell-cell and cell-matrix junctions. Has no phosphoglucomutase activity in vitro. In Homo sapiens (Human), this protein is Phosphoglucomutase-like protein 5.